Reading from the N-terminus, the 510-residue chain is NAD(P)H-quinone oxidoreductase subunit 2 A, chloroplastic (510 aa).

The next 13 membrane-spanning stretches (helical) occupy residues 24-44 (LLLFDGSLIFPECILIFGLIL), 57-77 (IPWLYFISSTSLVMSITALLF), 99-119 (IFQFLILLCSTLCIPLSVEYI), 124-144 (MAITEFLLFVLTATLGGMFLC), 149-169 (LITIFVAPECFSLCSYLLSGY), 183-203 (YLLMGGASSSILVHGFSWLYG), 227-247 (PGISIALIFITVGIGFKLSPA), 295-315 (WHLLLEILAILSMILGNLIAI), 323-343 (MLAYSSIGQIGYVIIGIIVGD), 354-374 (YMLFYISMNLGTFACIVLFGL), 395-415 (ALSLALCLLSLGGLPPLAGFF), 418-438 (LYLFWCGWQAGLYFLVLIGLL), and 484-504 (MIVCVIASTIPGISMNPIIAI).

The protein belongs to the complex I subunit 2 family. In terms of assembly, NDH is composed of at least 16 different subunits, 5 of which are encoded in the nucleus.

It is found in the plastid. The protein resides in the chloroplast thylakoid membrane. The catalysed reaction is a plastoquinone + NADH + (n+1) H(+)(in) = a plastoquinol + NAD(+) + n H(+)(out). The enzyme catalyses a plastoquinone + NADPH + (n+1) H(+)(in) = a plastoquinol + NADP(+) + n H(+)(out). Its function is as follows. NDH shuttles electrons from NAD(P)H:plastoquinone, via FMN and iron-sulfur (Fe-S) centers, to quinones in the photosynthetic chain and possibly in a chloroplast respiratory chain. The immediate electron acceptor for the enzyme in this species is believed to be plastoquinone. Couples the redox reaction to proton translocation, and thus conserves the redox energy in a proton gradient. This is NAD(P)H-quinone oxidoreductase subunit 2 A, chloroplastic from Solanum lycopersicum (Tomato).